A 561-amino-acid polypeptide reads, in one-letter code: Asparagine synthetase [glutamine-hydrolyzing] (561 aa).

The active-site For GATase activity is C2. Residues 2-191 (CGIWALFGSD…PGHYEVLDLK (190 aa)) enclose the Glutamine amidotransferase type-2 domain. L-glutamine-binding positions include 49 to 53 (RLAVV), 75 to 77 (NGE), and D97. The 324-residue stretch at 213 to 536 (HALYDNVEKL…PGRADWLSHY (324 aa)) folds into the Asparagine synthetase domain. ATP-binding positions include L256, I288, and 363–364 (SG). K385 is modified (N6-acetyllysine). Position 545 is a phosphothreonine (T545). S557 bears the Phosphoserine mark.

The catalysed reaction is L-aspartate + L-glutamine + ATP + H2O = L-asparagine + L-glutamate + AMP + diphosphate + H(+). The protein operates within amino-acid biosynthesis; L-asparagine biosynthesis; L-asparagine from L-aspartate (L-Gln route): step 1/1. This is Asparagine synthetase [glutamine-hydrolyzing] (ASNS) from Pongo abelii (Sumatran orangutan).